A 701-amino-acid polypeptide reads, in one-letter code: Polyribonucleotide nucleotidyltransferase (701 aa).

The Mg(2+) site is built by D487 and D493. The 60-residue stretch at 554–613 (PTMIAMKIDTDKIRDVIGKGGATIRAICEETKASIDIEDDGSIKIFGETKEAAEAAKQRI) folds into the KH domain. An S1 motif domain is found at 623–691 (GKIYVGKVER…NRGRIKLSIK (69 aa)).

This sequence belongs to the polyribonucleotide nucleotidyltransferase family. In terms of assembly, component of the RNA degradosome, which is a multiprotein complex involved in RNA processing and mRNA degradation. Requires Mg(2+) as cofactor.

It is found in the cytoplasm. The catalysed reaction is RNA(n+1) + phosphate = RNA(n) + a ribonucleoside 5'-diphosphate. In terms of biological role, involved in mRNA degradation. Catalyzes the phosphorolysis of single-stranded polyribonucleotides processively in the 3'- to 5'-direction. This Pseudomonas putida (strain GB-1) protein is Polyribonucleotide nucleotidyltransferase.